Here is a 186-residue protein sequence, read N- to C-terminus: Ribosome rescue factor SmrB (186 aa).

Residues 99–174 (IDLHGLTQHQ…SDAAIIVIIE (76 aa)) enclose the Smr domain.

This sequence belongs to the SmrB family. In terms of assembly, associates with collided ribosomes, but not with correctly translating polysomes.

Its function is as follows. Acts as a ribosome collision sensor. Detects stalled/collided disomes (pairs of ribosomes where the leading ribosome is stalled and a second ribosome has collided with it) and endonucleolytically cleaves mRNA at the 5' boundary of the stalled ribosome. Stalled/collided disomes form a new interface (primarily via the 30S subunits) that binds SmrB. Cleaved mRNA becomes available for tmRNA ligation, leading to ribosomal subunit dissociation and rescue of stalled ribosomes. The protein is Ribosome rescue factor SmrB of Buchnera aphidicola subsp. Acyrthosiphon pisum (strain Tuc7).